We begin with the raw amino-acid sequence, 427 residues long: 3-isopropylmalate dehydratase large subunit (427 aa).

[4Fe-4S] cluster-binding residues include Cys308, Cys368, and Cys371.

Belongs to the aconitase/IPM isomerase family. LeuC type 2 subfamily. Heterodimer of LeuC and LeuD. [4Fe-4S] cluster serves as cofactor.

It catalyses the reaction (2R,3S)-3-isopropylmalate = (2S)-2-isopropylmalate. The protein operates within amino-acid biosynthesis; L-leucine biosynthesis; L-leucine from 3-methyl-2-oxobutanoate: step 2/4. In terms of biological role, catalyzes the isomerization between 2-isopropylmalate and 3-isopropylmalate, via the formation of 2-isopropylmaleate. This chain is 3-isopropylmalate dehydratase large subunit, found in Geotalea uraniireducens (strain Rf4) (Geobacter uraniireducens).